A 940-amino-acid chain; its full sequence is Receptor-like protein 9b (940 aa).

An N-terminal signal peptide occupies residues 1-28 (MLMMFSPAFVMVMDLMVLVMMIMMMVSS). Topologically, residues 29 to 895 (LDAHGHISCI…GDEETTIDME (867 aa)) are extracellular. Residues Asn53, Asn63, Asn66, Asn101, Asn115, and Asn151 are each glycosylated (N-linked (GlcNAc...) asparagine). LRR repeat units lie at residues 108 to 136 (FGELQTLNLSNFWCQGWFDHIHGYKSFER), 137 to 163 (LKNLEILDISENGVNNTVLPFINTASS), 165 to 185 (KTLILHGNNMEGTFPMKELIN), 186 to 211 (LRNLELLDLSKNQFVGPVPDLANFHN), 213 to 232 (QGLDMSDNKFSGSNKGLCQL), 233 to 255 (KNLRELDLSQNKFTGQFPQCFDS), 257 to 279 (TQLQVLDISSNNFNGTVPSLIRN), 281 to 304 (DSVEYLALSDNEFKGFFSLELIAN), 306 to 330 (SKLKVFKLSSRSNLLRLKKLSSLQP), 331 to 354 (KFQLSVIELQNCNLENVPSFIQHQ), 355 to 378 (KDLHVINLSNNKLTGVFPYWLLEK), 379 to 402 (YPNLRVLLLQNNSLTMLELPRLLN), 403 to 426 (HTLQILDLSANNFDQRLPENIGKV), 427 to 450 (LPNIRHLNLSNNGFQWILPSSFGE), 452 to 475 (KDIKFLDLSHNNFSGSLPMKFLIG), and 477 to 502 (SSLHTLKLSYNKFFGQIFPKQTNFGS). N-linked (GlcNAc...) asparagine glycans are attached at residues Asn270 and Asn304. Asn361, Asn389, and Asn402 each carry an N-linked (GlcNAc...) asparagine glycan. N-linked (GlcNAc...) asparagine glycans are attached at residues Asn434 and Asn463. Residues 503–522 (LVVLIANNNLFTGIADGLRN) form an LRR 17; degenerate repeat. LRR repeat units lie at residues 523 to 546 (VQSLGVLDLSNNYLQGVIPSWFGG), 547 to 570 (FFFAYLFLSNNLLEGTLPSTLFSK), 571 to 593 (PTFKILDLSGNKFSGNLPSHFTG), 595 to 615 (DMSLLYLNDNEFSGTIPSTLI), 616 to 639 (KDVLVLDLRNNKLSGTIPHFVKNE), 641 to 662 (ILSLLLRGNTLTGHIPTDLCGL), 663 to 686 (RSIRILDLANNRLKGSIPTCLNNV), 752 to 776 (FNFMFGLDLSSNELSGDIPKELGDL), 777 to 799 (QRIRALNLSHNSLSGLIPQSFSN), 801 to 824 (TDIESIDLSFNLLRGPIPQDLSKL), and 826 to 849 (YMVVFNVSYNNLSGSIPSHGKFST). Asn685 is a glycosylation site (N-linked (GlcNAc...) asparagine). N-linked (GlcNAc...) asparagine glycans are attached at residues Asn783 and Asn799. Residues Asn831, Asn836, Asn867, and Asn873 are each glycosylated (N-linked (GlcNAc...) asparagine). Residues 896 to 916 (IFYWSLAATYGVTWITFIVFL) traverse the membrane as a helical segment. The Cytoplasmic portion of the chain corresponds to 917–940 (CFDSPWRRVWFHFVDAFISLFKCV).

The protein belongs to the RLP family.

The protein resides in the cell membrane. The chain is Receptor-like protein 9b from Arabidopsis thaliana (Mouse-ear cress).